The sequence spans 559 residues: Cytochrome P450 86B1 (559 aa).

A helical membrane pass occupies residues 31-51 (FLLRDVQILELLIAIFVFVAI). A heme-binding site is contributed by cysteine 488.

It belongs to the cytochrome P450 family. It depends on heme as a cofactor. In terms of tissue distribution, expressed in roots endodermis, anthers, stigmas, stomata of young pedicels of inflorescences, the placenta region of siliques, at the level of the hilum in matures seeds, at the junction of siliques to pedicels where abscission of floral parts takes place and in nectary glands.

It localises to the endoplasmic reticulum membrane. Involved in very long chain fatty acids (VLCFA) omega-hydroxylation. Required for the synthesis of saturated VLCFA alpha, omega-bifunctional suberin monomers. This chain is Cytochrome P450 86B1 (CYP86B1), found in Arabidopsis thaliana (Mouse-ear cress).